The chain runs to 435 residues: Serine--tRNA ligase (435 aa).

241–243 (TAE) serves as a coordination point for L-serine. 272–274 (RSE) is an ATP binding site. Position 295 (glutamate 295) interacts with L-serine. Position 359 to 362 (359 to 362 (EISS)) interacts with ATP. Residue serine 395 coordinates L-serine.

It belongs to the class-II aminoacyl-tRNA synthetase family. Type-1 seryl-tRNA synthetase subfamily. As to quaternary structure, homodimer. The tRNA molecule binds across the dimer.

Its subcellular location is the cytoplasm. It carries out the reaction tRNA(Ser) + L-serine + ATP = L-seryl-tRNA(Ser) + AMP + diphosphate + H(+). The catalysed reaction is tRNA(Sec) + L-serine + ATP = L-seryl-tRNA(Sec) + AMP + diphosphate + H(+). Its pathway is aminoacyl-tRNA biosynthesis; selenocysteinyl-tRNA(Sec) biosynthesis; L-seryl-tRNA(Sec) from L-serine and tRNA(Sec): step 1/1. Functionally, catalyzes the attachment of serine to tRNA(Ser). Is also able to aminoacylate tRNA(Sec) with serine, to form the misacylated tRNA L-seryl-tRNA(Sec), which will be further converted into selenocysteinyl-tRNA(Sec). This is Serine--tRNA ligase from Actinobacillus pleuropneumoniae serotype 7 (strain AP76).